A 237-amino-acid chain; its full sequence is CD209 antigen-like protein D (237 aa).

Residues 1–54 (MSDSMESKTQQVVIPEDEECLMSGTRYSDISSRLQTKFGIKSLAEYTKQSRNPL) are Cytoplasmic-facing. A helical; Signal-anchor for type II membrane protein membrane pass occupies residues 55 to 75 (VLQLLSFLFLAGLLLIILILV). The Extracellular portion of the chain corresponds to 76-237 (SKVPSSEVQN…KVSTSSCTTK (162 aa)). An intrachain disulfide couples Cys-106 to Cys-117. Positions 112 to 227 (FFNGSCYFFS…CDKLLFWICK (116 aa)) constitute a C-type lectin domain. 2 N-linked (GlcNAc...) asparagine glycosylation sites follow: Asn-114 and Asn-129. Disulfide bonds link Cys-134/Cys-226 and Cys-205/Cys-218. The Ca(2+) site is built by Glu-196, Asn-198, Glu-203, Asn-214, and Asp-215.

It localises to the membrane. Its function is as follows. Probable pathogen-recognition receptor. May mediate the endocytosis of pathogens which are subsequently degraded in lysosomal compartments. May recognize in a calcium-dependent manner high mannose N-linked oligosaccharides in a variety of pathogen antigens. The sequence is that of CD209 antigen-like protein D (Cd209d) from Mus musculus (Mouse).